The chain runs to 127 residues: Mini-ribonuclease 3-like protein (127 aa).

Residue aspartate 19 is part of the active site.

Belongs to the MrnC RNase family.

Functionally, might be a ribonuclease involved in RNA processing. The chain is Mini-ribonuclease 3-like protein (mrnCL) from Ilyobacter polytropus (strain ATCC 51220 / DSM 2926 / LMG 16218 / CuHBu1).